A 283-amino-acid chain; its full sequence is 2-hydroxy-6-oxononadienedioate/2-hydroxy-6-oxononatrienedioate hydrolase (283 aa).

The 235-residue stretch at 35–269 (VVVMFHGSGP…KCGHWAQWEH (235 aa)) folds into the AB hydrolase-1 domain. The Proton acceptor role is filled by H263.

This sequence belongs to the AB hydrolase superfamily. MhpC family. Homodimer.

It carries out the reaction (2Z,4E)-2-hydroxy-6-oxonona-2,4-dienedioate + H2O = (2Z)-2-hydroxypenta-2,4-dienoate + succinate + H(+). It catalyses the reaction (2Z,4E,7E)-2-hydroxy-6-oxonona-2,4,7-trienedioate + H2O = (2Z)-2-hydroxypenta-2,4-dienoate + fumarate + H(+). It functions in the pathway aromatic compound metabolism; 3-phenylpropanoate degradation. Its function is as follows. Catalyzes the cleavage of the C5-C6 bond of 2-hydroxy-6-oxononadienedioate and 2-hydroxy-6-oxononatrienedioate, a dienol ring fission product of the bacterial meta-cleavage pathway for degradation of phenylpropionic acid. This chain is 2-hydroxy-6-oxononadienedioate/2-hydroxy-6-oxononatrienedioate hydrolase, found in Pseudomonas sp.